The primary structure comprises 397 residues: Argininosuccinate synthase (397 aa).

Residue 9–17 (AYSGGLDTS) coordinates ATP. Tyrosine 85 is a binding site for L-citrulline. Glycine 115 lines the ATP pocket. Residues threonine 117, asparagine 121, and aspartate 122 each contribute to the L-aspartate site. Asparagine 121 lines the L-citrulline pocket. Residues arginine 125, serine 173, glutamate 258, and tyrosine 270 each coordinate L-citrulline.

The protein belongs to the argininosuccinate synthase family. Type 1 subfamily. As to quaternary structure, homotetramer.

It is found in the cytoplasm. It catalyses the reaction L-citrulline + L-aspartate + ATP = 2-(N(omega)-L-arginino)succinate + AMP + diphosphate + H(+). Its pathway is amino-acid biosynthesis; L-arginine biosynthesis; L-arginine from L-ornithine and carbamoyl phosphate: step 2/3. This Streptococcus suis (strain 05ZYH33) protein is Argininosuccinate synthase.